A 177-amino-acid chain; its full sequence is ATP synthase subunit delta (177 aa).

Belongs to the ATPase delta chain family. In terms of assembly, F-type ATPases have 2 components, F(1) - the catalytic core - and F(0) - the membrane proton channel. F(1) has five subunits: alpha(3), beta(3), gamma(1), delta(1), epsilon(1). F(0) has three main subunits: a(1), b(2) and c(10-14). The alpha and beta chains form an alternating ring which encloses part of the gamma chain. F(1) is attached to F(0) by a central stalk formed by the gamma and epsilon chains, while a peripheral stalk is formed by the delta and b chains.

The protein resides in the cell inner membrane. F(1)F(0) ATP synthase produces ATP from ADP in the presence of a proton or sodium gradient. F-type ATPases consist of two structural domains, F(1) containing the extramembraneous catalytic core and F(0) containing the membrane proton channel, linked together by a central stalk and a peripheral stalk. During catalysis, ATP synthesis in the catalytic domain of F(1) is coupled via a rotary mechanism of the central stalk subunits to proton translocation. Its function is as follows. This protein is part of the stalk that links CF(0) to CF(1). It either transmits conformational changes from CF(0) to CF(1) or is implicated in proton conduction. The sequence is that of ATP synthase subunit delta from Neisseria meningitidis serogroup B (strain ATCC BAA-335 / MC58).